Consider the following 337-residue polypeptide: MNKLLILFLLLNAALTRQDNHASANNKPMLYNINSAPLYFEKFITQYNKQYKSEDEKKYRYNIFRHNIESINQKNSRNDSAVYKINRFADMPKNEIVIRHTGLASGELGLNFCETIVVDGPAQRQRPVSFDWRSMNKITSVKDQGMCGACWRFASLGALESQYAIKYDRLIDLSEQQLVDCDFVDMGCDGGLIHTAYEQIMKMGGVEQEFDYSYKAERQPCALKPHKFATGVRNCYRYVILNEERLEDLLRYVGPIAIAVDAVDLTDYYGGIVSFCENNGLNHAVLLVGYGVENNVPYWIIKNSWGSDYGEDGYVRVRRGVNSCGMINELASSAQVV.

A signal peptide spans 1-16 (MNKLLILFLLLNAALT). A propeptide spans 17-126 (RQDNHASANN…VVDGPAQRQR (110 aa)) (activation peptide). 3 cysteine pairs are disulfide-bonded: cysteine 147–cysteine 188, cysteine 181–cysteine 221, and cysteine 276–cysteine 324. Cysteine 150 is an active-site residue. Catalysis depends on residues histidine 283 and asparagine 303.

Belongs to the peptidase C1 family. In terms of processing, synthesized as an inactive proenzyme and activated by proteolytic removal of the inhibitory propeptide.

It catalyses the reaction Endopeptidase of broad specificity, hydrolyzing substrates of both cathepsin L and cathepsin B.. Functionally, cysteine protease that plays an essential role in host liquefaction to facilitate horizontal transmission of the virus. May participate in the degradation of foreign protein expressed by the baculovirus system. This chain is Viral cathepsin (VCATH), found in Lepidoptera (butterflies and moths).